The chain runs to 657 residues: Keratinocyte proline-rich protein (657 aa).

Disordered stretches follow at residues 285–320, 425–493, and 517–568; these read QGTY…SPPR, HPFP…PSPE, and QPVP…CGQP. Over residues 292–302 the composition is skewed to low complexity; the sequence is TSQRRSQSTSR. Residues 434–444 are compositionally biased toward basic and acidic residues; that stretch reads QHLDRSPESSR. Phosphoserine is present on S442. Pro residues-rich tracts occupy residues 449–493, 517–530, and 539–561; these read VPAP…PSPE, QPVP…VPRP, and GPRP…PCSS.

It localises to the cytoplasm. This Mus musculus (Mouse) protein is Keratinocyte proline-rich protein.